We begin with the raw amino-acid sequence, 137 residues long: ATP synthase epsilon chain (137 aa).

Belongs to the ATPase epsilon chain family. F-type ATPases have 2 components, CF(1) - the catalytic core - and CF(0) - the membrane proton channel. CF(1) has five subunits: alpha(3), beta(3), gamma(1), delta(1), epsilon(1). CF(0) has three main subunits: a, b and c.

The protein resides in the cell inner membrane. Its function is as follows. Produces ATP from ADP in the presence of a proton gradient across the membrane. The chain is ATP synthase epsilon chain from Ruegeria sp. (strain TM1040) (Silicibacter sp.).